Reading from the N-terminus, the 86-residue chain is Secreted transmembrane peptide 6 (86 aa).

Positions 1–31 (MGMKSPNIAAFMLPLLLILFTLSSQLKVVES) are cleaved as a signal peptide. The short motif at 45 to 58 (IVYTPPSRSCGTSP) is the SCOOP motif element. A SxS motif essential for MIK2 binding motif is present at residues 51–53 (SRS).

The protein belongs to the serine rich endogenous peptide (SCOOP) phytocytokine family. As to quaternary structure, interacts with MIK2 (via extracellular leucine-rich repeat domain); this interaction triggers the formation of complex between MIK2 and the BAK1/SERK3 and SERK4 coreceptors, and subsequent BAK1 activation by phosphorylation. As to expression, mostly expressed in leaves, and, to a lower extent, in roots, stems, siliques, seeds and flowers.

It localises to the cell membrane. The protein localises to the secreted. The protein resides in the extracellular space. Its subcellular location is the apoplast. Brassicaceae-specific phytocytokine (plant endogenous peptide released into the apoplast) perceived by MIK2 in a BAK1/SERK3 and SERK4 coreceptors-dependent manner, that modulates various physiological and antimicrobial processes including growth prevention and reactive oxygen species (ROS) response regulation. Prevents general growth and development. This chain is Secreted transmembrane peptide 6, found in Arabidopsis thaliana (Mouse-ear cress).